A 602-amino-acid chain; its full sequence is Aspartate--tRNA(Asp/Asn) ligase (602 aa).

Glu175 contributes to the L-aspartate binding site. Residues 199–202 (QIFK) are aspartate. Arg221 is an L-aspartate binding site. ATP is bound by residues 221–223 (RDE) and Gln230. L-aspartate is bound at residue His458. ATP is bound at residue Glu492. Residue Arg499 participates in L-aspartate binding. 544-547 (GLDR) is an ATP binding site.

Belongs to the class-II aminoacyl-tRNA synthetase family. Type 1 subfamily. Homodimer.

The protein localises to the cytoplasm. It catalyses the reaction tRNA(Asx) + L-aspartate + ATP = L-aspartyl-tRNA(Asx) + AMP + diphosphate. Functionally, aspartyl-tRNA synthetase with relaxed tRNA specificity since it is able to aspartylate not only its cognate tRNA(Asp) but also tRNA(Asn). Reaction proceeds in two steps: L-aspartate is first activated by ATP to form Asp-AMP and then transferred to the acceptor end of tRNA(Asp/Asn). The polypeptide is Aspartate--tRNA(Asp/Asn) ligase (Cupriavidus taiwanensis (strain DSM 17343 / BCRC 17206 / CCUG 44338 / CIP 107171 / LMG 19424 / R1) (Ralstonia taiwanensis (strain LMG 19424))).